The chain runs to 93 residues: Integration host factor subunit beta (93 aa).

The protein belongs to the bacterial histone-like protein family. Heterodimer of an alpha and a beta chain.

Its function is as follows. This protein is one of the two subunits of integration host factor, a specific DNA-binding protein that functions in genetic recombination as well as in transcriptional and translational control. The chain is Integration host factor subunit beta from Vibrio parahaemolyticus serotype O3:K6 (strain RIMD 2210633).